Here is a 512-residue protein sequence, read N- to C-terminus: Activin receptor type-2B (512 aa).

A signal peptide spans 1-24 (MSASWLTLAVLCATLGAGPGHGEA). The Extracellular segment spans residues 25–137 (ETRECIYYNA…PPPPTPSLLN (113 aa)). Cystine bridges form between Cys29–Cys59, Cys49–Cys77, Cys84–Cys103, Cys90–Cys102, and Cys104–Cys109. Asn42 and Asn65 each carry an N-linked (GlcNAc...) asparagine glycan. Residues 138–158 (ILVYSLLPIAVLSVAILLAFW) form a helical membrane-spanning segment. At 159–512 (MYRHRKPPYG…VDLPPKESSI (354 aa)) the chain is on the cytoplasmic side. The Protein kinase domain maps to 190-478 (LQLLEIKARG…LSAGCVEERI (289 aa)). Residues 196-204 (KARGRFGCV) and Lys217 contribute to the ATP site. The active-site Proton acceptor is the Asp321.

This sequence belongs to the protein kinase superfamily. TKL Ser/Thr protein kinase family. TGFB receptor subfamily. Requires Mg(2+) as cofactor. The cofactor is Mn(2+). Not expressed in hen anterior pituitary during the ovulatory cycle but expressed in the ovarian follicle.

Its subcellular location is the membrane. The catalysed reaction is L-threonyl-[receptor-protein] + ATP = O-phospho-L-threonyl-[receptor-protein] + ADP + H(+). The enzyme catalyses L-seryl-[receptor-protein] + ATP = O-phospho-L-seryl-[receptor-protein] + ADP + H(+). Functionally, on ligand binding, forms a receptor complex consisting of two type II and two type I transmembrane serine/threonine kinases. Type II receptors phosphorylate and activate type I receptors which autophosphorylate, then bind and activate SMAD transcriptional regulators. Receptor for activin A, activin B and inhibin A. May modulate neuropeptide expression in dorsal root ganglia (DRG) neurons and ovarian follicle development. The sequence is that of Activin receptor type-2B (ACVR2B) from Gallus gallus (Chicken).